The primary structure comprises 173 residues: Adenine phosphoribosyltransferase (173 aa).

It belongs to the purine/pyrimidine phosphoribosyltransferase family. Homodimer.

Its subcellular location is the cytoplasm. It carries out the reaction AMP + diphosphate = 5-phospho-alpha-D-ribose 1-diphosphate + adenine. It participates in purine metabolism; AMP biosynthesis via salvage pathway; AMP from adenine: step 1/1. In terms of biological role, catalyzes a salvage reaction resulting in the formation of AMP, that is energically less costly than de novo synthesis. In Chloroflexus aurantiacus (strain ATCC 29366 / DSM 635 / J-10-fl), this protein is Adenine phosphoribosyltransferase.